A 259-amino-acid polypeptide reads, in one-letter code: Thiazole synthase (259 aa).

Residue K100 is the Schiff-base intermediate with DXP of the active site. Residues G161, 187-188 (AG), and 209-210 (AS) contribute to the 1-deoxy-D-xylulose 5-phosphate site.

This sequence belongs to the ThiG family. As to quaternary structure, homotetramer. Forms heterodimers with either ThiH or ThiS.

The protein localises to the cytoplasm. The catalysed reaction is [ThiS sulfur-carrier protein]-C-terminal-Gly-aminoethanethioate + 2-iminoacetate + 1-deoxy-D-xylulose 5-phosphate = [ThiS sulfur-carrier protein]-C-terminal Gly-Gly + 2-[(2R,5Z)-2-carboxy-4-methylthiazol-5(2H)-ylidene]ethyl phosphate + 2 H2O + H(+). It participates in cofactor biosynthesis; thiamine diphosphate biosynthesis. Its function is as follows. Catalyzes the rearrangement of 1-deoxy-D-xylulose 5-phosphate (DXP) to produce the thiazole phosphate moiety of thiamine. Sulfur is provided by the thiocarboxylate moiety of the carrier protein ThiS. In vitro, sulfur can be provided by H(2)S. The polypeptide is Thiazole synthase (Salinispora arenicola (strain CNS-205)).